A 97-amino-acid polypeptide reads, in one-letter code: UPF0298 protein MGAS9429_Spy0329 (97 aa).

The protein belongs to the UPF0298 family.

It is found in the cytoplasm. In Streptococcus pyogenes serotype M12 (strain MGAS9429), this protein is UPF0298 protein MGAS9429_Spy0329.